The following is an 86-amino-acid chain: Small ribosomal subunit protein uS17 (86 aa).

Belongs to the universal ribosomal protein uS17 family. Part of the 30S ribosomal subunit.

Functionally, one of the primary rRNA binding proteins, it binds specifically to the 5'-end of 16S ribosomal RNA. The chain is Small ribosomal subunit protein uS17 from Halorhodospira halophila (strain DSM 244 / SL1) (Ectothiorhodospira halophila (strain DSM 244 / SL1)).